The chain runs to 297 residues: 5'-3' exonuclease (297 aa).

In terms of domain architecture, 5'-3' exonuclease spans 171–262 (EPDQIVDFKA…MKLEKELFAI (92 aa)).

Functionally, 5'-3' exonuclease acting preferentially on double-stranded DNA. The protein is 5'-3' exonuclease (polA) of Mycoplasmopsis pulmonis (strain UAB CTIP) (Mycoplasma pulmonis).